Consider the following 393-residue polypeptide: MTAPTTRKDLMIVNMGPQHPSMHGVLRLIVTLDGEDVVDCEPILGYLHRGMEKIAENRTIIQYLPYVTRWDYLATMFTEAITINGPEQLGNIQVPKRASYIRVIMLELSRIASHLLWLGPFMADIGAQTPFFYIFRERELIYDLFEAATGMRMMHNYFRIGGVAADLPYGWIDKCLDFCDYFLTGVAEYQKLITRNPIFLERVEGVGIIGGDEALNWGLSGPMLRASGIEWDLRKVDHYESYDEFDWQVQWQREGDSLARYLVRIGEMTESIKIIQQALEGIPGGPYENLEIRRFDRLKDPEWNDFEYRFISKKPSPTFELSKQELYVRVEAPKGELGIFLIGDQSVFPWRWKIRPPGFINLQILPQLVKRMKLADIMTILGSIDIIMGEVDR.

It belongs to the complex I 49 kDa subunit family. In terms of assembly, NDH is composed of at least 16 different subunits, 5 of which are encoded in the nucleus.

Its subcellular location is the plastid. It is found in the chloroplast thylakoid membrane. It carries out the reaction a plastoquinone + NADH + (n+1) H(+)(in) = a plastoquinol + NAD(+) + n H(+)(out). The enzyme catalyses a plastoquinone + NADPH + (n+1) H(+)(in) = a plastoquinol + NADP(+) + n H(+)(out). In terms of biological role, NDH shuttles electrons from NAD(P)H:plastoquinone, via FMN and iron-sulfur (Fe-S) centers, to quinones in the photosynthetic chain and possibly in a chloroplast respiratory chain. The immediate electron acceptor for the enzyme in this species is believed to be plastoquinone. Couples the redox reaction to proton translocation, and thus conserves the redox energy in a proton gradient. This is NAD(P)H-quinone oxidoreductase subunit H, chloroplastic from Nicotiana sylvestris (Wood tobacco).